The sequence spans 945 residues: Leucine--tRNA ligase (945 aa).

Positions 43-53 (PYPNGAIHIGH) match the 'HIGH' region motif. A 'KMSKS' region motif is present at residues 638-642 (KMSKS). Lys-641 lines the ATP pocket.

This sequence belongs to the class-I aminoacyl-tRNA synthetase family.

Its subcellular location is the cytoplasm. It catalyses the reaction tRNA(Leu) + L-leucine + ATP = L-leucyl-tRNA(Leu) + AMP + diphosphate. In Pyrobaculum aerophilum (strain ATCC 51768 / DSM 7523 / JCM 9630 / CIP 104966 / NBRC 100827 / IM2), this protein is Leucine--tRNA ligase.